Here is a 156-residue protein sequence, read N- to C-terminus: Small ribosomal subunit protein uS7 (156 aa).

Belongs to the universal ribosomal protein uS7 family. In terms of assembly, part of the 30S ribosomal subunit. Contacts proteins S9 and S11.

Its function is as follows. One of the primary rRNA binding proteins, it binds directly to 16S rRNA where it nucleates assembly of the head domain of the 30S subunit. Is located at the subunit interface close to the decoding center, probably blocks exit of the E-site tRNA. The polypeptide is Small ribosomal subunit protein uS7 (Bartonella quintana (strain Toulouse) (Rochalimaea quintana)).